The chain runs to 265 residues: 4-hydroxy-tetrahydrodipicolinate reductase (265 aa).

Residues 7-12, Asp33, 96-98, and 120-123 contribute to the NAD(+) site; these read GASGRM, GTT, and AANM. His153 functions as the Proton donor/acceptor in the catalytic mechanism. (S)-2,3,4,5-tetrahydrodipicolinate is bound at residue His154. Lys157 (proton donor) is an active-site residue. Residue 163–164 coordinates (S)-2,3,4,5-tetrahydrodipicolinate; that stretch reads GT.

Belongs to the DapB family.

The protein resides in the cytoplasm. The enzyme catalyses (S)-2,3,4,5-tetrahydrodipicolinate + NAD(+) + H2O = (2S,4S)-4-hydroxy-2,3,4,5-tetrahydrodipicolinate + NADH + H(+). The catalysed reaction is (S)-2,3,4,5-tetrahydrodipicolinate + NADP(+) + H2O = (2S,4S)-4-hydroxy-2,3,4,5-tetrahydrodipicolinate + NADPH + H(+). It functions in the pathway amino-acid biosynthesis; L-lysine biosynthesis via DAP pathway; (S)-tetrahydrodipicolinate from L-aspartate: step 4/4. Its function is as follows. Catalyzes the conversion of 4-hydroxy-tetrahydrodipicolinate (HTPA) to tetrahydrodipicolinate. The chain is 4-hydroxy-tetrahydrodipicolinate reductase from Cupriavidus metallidurans (strain ATCC 43123 / DSM 2839 / NBRC 102507 / CH34) (Ralstonia metallidurans).